A 580-amino-acid polypeptide reads, in one-letter code: Aspartate--tRNA ligase (580 aa).

Position 173 (glutamate 173) interacts with L-aspartate. The segment at 195-198 is aspartate; that stretch reads QIYK. Residue arginine 217 coordinates L-aspartate. ATP-binding positions include 217 to 219 and glutamine 226; that span reads RDE. Histidine 443 provides a ligand contact to L-aspartate. Glutamate 477 provides a ligand contact to ATP. Arginine 484 contacts L-aspartate. Position 529–532 (529–532) interacts with ATP; the sequence is GIER.

This sequence belongs to the class-II aminoacyl-tRNA synthetase family. Type 1 subfamily. In terms of assembly, homodimer.

Its subcellular location is the cytoplasm. The catalysed reaction is tRNA(Asp) + L-aspartate + ATP = L-aspartyl-tRNA(Asp) + AMP + diphosphate. In terms of biological role, catalyzes the attachment of L-aspartate to tRNA(Asp) in a two-step reaction: L-aspartate is first activated by ATP to form Asp-AMP and then transferred to the acceptor end of tRNA(Asp). The chain is Aspartate--tRNA ligase from Malacoplasma penetrans (strain HF-2) (Mycoplasma penetrans).